A 317-amino-acid chain; its full sequence is MYNYLDFEKPVADLEGQILELKKLAQEQGSVEMGDEISRLEKRSADALKDIYRKLTPWQKAQIARHPDRPHCLEYIDRLFTEFTPLAGDRKFANDEALQAGFGRFNGTPVAIIGQEKGSDTKTRLKHNFGSARPEGYRKAVRIMEMADRFQLPLITFVDTAGAYPGVSAEERGQAEAIARSTAECLKLRVPVISIIIGEGGSGGAIAIAVANRVYMLEHSIYSVISPEGAASILWHDSTRAKDAASDMRITAQDLFDLKIIDGIIPEPLGGAHRGKESVIDATGDIIAASLRSMKDIDGETLKQERRQKFLEIGRNI.

Positions 40 to 293 constitute a CoA carboxyltransferase C-terminal domain; the sequence is LEKRSADALK…GDIIAASLRS (254 aa).

Belongs to the AccA family. As to quaternary structure, acetyl-CoA carboxylase is a heterohexamer composed of biotin carboxyl carrier protein (AccB), biotin carboxylase (AccC) and two subunits each of ACCase subunit alpha (AccA) and ACCase subunit beta (AccD).

It localises to the cytoplasm. It carries out the reaction N(6)-carboxybiotinyl-L-lysyl-[protein] + acetyl-CoA = N(6)-biotinyl-L-lysyl-[protein] + malonyl-CoA. It participates in lipid metabolism; malonyl-CoA biosynthesis; malonyl-CoA from acetyl-CoA: step 1/1. Component of the acetyl coenzyme A carboxylase (ACC) complex. First, biotin carboxylase catalyzes the carboxylation of biotin on its carrier protein (BCCP) and then the CO(2) group is transferred by the carboxyltransferase to acetyl-CoA to form malonyl-CoA. The chain is Acetyl-coenzyme A carboxylase carboxyl transferase subunit alpha from Brucella canis (strain ATCC 23365 / NCTC 10854 / RM-666).